We begin with the raw amino-acid sequence, 112 residues long: Putative iron-sulfur cluster insertion protein ErpA (112 aa).

Residues C40, C104, and C106 each coordinate iron-sulfur cluster.

The protein belongs to the HesB/IscA family. As to quaternary structure, homodimer. Requires iron-sulfur cluster as cofactor.

Its function is as follows. Required for insertion of 4Fe-4S clusters. The chain is Putative iron-sulfur cluster insertion protein ErpA from Neisseria gonorrhoeae (strain ATCC 700825 / FA 1090).